The following is a 263-amino-acid chain: 5'-nucleotidase SurE (263 aa).

A divalent metal cation contacts are provided by aspartate 11, aspartate 12, serine 42, and asparagine 96.

This sequence belongs to the SurE nucleotidase family. The cofactor is a divalent metal cation.

It is found in the cytoplasm. It carries out the reaction a ribonucleoside 5'-phosphate + H2O = a ribonucleoside + phosphate. Functionally, nucleotidase that shows phosphatase activity on nucleoside 5'-monophosphates. This Methanocorpusculum labreanum (strain ATCC 43576 / DSM 4855 / Z) protein is 5'-nucleotidase SurE.